The sequence spans 332 residues: Serpentine receptor class alpha-10 (332 aa).

At 1–26 (MTSSNISICATEDQMVLQTSLLLRVN) the chain is on the extracellular side. The chain crosses the membrane as a helical span at residues 27–47 (VILMTTVAIFTFVLTYRALFI). At 48–64 (LKQRPIFHKSTKILLYT) the chain is on the cytoplasmic side. The chain crosses the membrane as a helical span at residues 65–85 (SLIFVNIHEIIFMVIQCVAFI). At 86-109 (RSFTLSDKPCEIMRTTLECRFKNH) the chain is on the extracellular side. A helical membrane pass occupies residues 110–132 (VLIFGIAGMNFNQFGLTVDRLLA). Residues 133–146 (TVIPQTYSHLGSFP) are Cytoplasmic-facing. A helical transmembrane segment spans residues 147 to 167 (GILISILVIGCSIAAPLIIAI). The Extracellular portion of the chain corresponds to 168–191 (GDPYDDIVPNCFFFPQHSAPRANV). Residues 192–212 (FLIILSALVIASIFLNLIIIF) traverse the membrane as a helical segment. The Cytoplasmic segment spans residues 213 to 239 (ANKKLEKGTRYYVSQRYQKREALISTR). A helical transmembrane segment spans residues 240 to 260 (IIVYIAASQFLGMVLYSTIVL). Over 261–276 (TLRLHKSMIPVSMYHN) the chain is Extracellular. A helical transmembrane segment spans residues 277-297 (IVWWAYTVPFAAVALPALLIH). Topologically, residues 298–332 (RINLVGSNRKRVINRITAKVETQEEHMKSLKELWG) are cytoplasmic.

Belongs to the nematode receptor-like protein sra family.

The protein localises to the membrane. The polypeptide is Serpentine receptor class alpha-10 (Caenorhabditis briggsae).